Here is a 261-residue protein sequence, read N- to C-terminus: Zinc import ATP-binding protein ZnuC (261 aa).

The ABC transporter domain maps to 5-220; it reads ISLKALSVTF…PSYIALFGSA (216 aa). 37–44 is a binding site for ATP; sequence GPNGAGKS. The tract at residues 236 to 261 is disordered; sequence HHDLAGQPVSGDATQCNHHHHGHHHD. Residues 252 to 261 are compositionally biased toward basic residues; it reads NHHHHGHHHD.

Belongs to the ABC transporter superfamily. Zinc importer (TC 3.A.1.15.5) family. The complex is composed of two ATP-binding proteins (ZnuC), two transmembrane proteins (ZnuB) and a solute-binding protein (ZnuA).

The protein localises to the cell inner membrane. The catalysed reaction is Zn(2+)(out) + ATP(in) + H2O(in) = Zn(2+)(in) + ADP(in) + phosphate(in) + H(+)(in). In terms of biological role, part of the ABC transporter complex ZnuABC involved in zinc import. Responsible for energy coupling to the transport system. This is Zinc import ATP-binding protein ZnuC from Vibrio vulnificus (strain CMCP6).